The primary structure comprises 345 residues: Phosphoribosylformylglycinamidine cyclo-ligase (345 aa).

Belongs to the AIR synthase family.

The protein resides in the cytoplasm. The enzyme catalyses 2-formamido-N(1)-(5-O-phospho-beta-D-ribosyl)acetamidine + ATP = 5-amino-1-(5-phospho-beta-D-ribosyl)imidazole + ADP + phosphate + H(+). The protein operates within purine metabolism; IMP biosynthesis via de novo pathway; 5-amino-1-(5-phospho-D-ribosyl)imidazole from N(2)-formyl-N(1)-(5-phospho-D-ribosyl)glycinamide: step 2/2. The chain is Phosphoribosylformylglycinamidine cyclo-ligase from Staphylococcus carnosus (strain TM300).